Consider the following 77-residue polypeptide: Exodeoxyribonuclease 7 small subunit (77 aa).

It belongs to the XseB family. As to quaternary structure, heterooligomer composed of large and small subunits.

The protein resides in the cytoplasm. The enzyme catalyses Exonucleolytic cleavage in either 5'- to 3'- or 3'- to 5'-direction to yield nucleoside 5'-phosphates.. In terms of biological role, bidirectionally degrades single-stranded DNA into large acid-insoluble oligonucleotides, which are then degraded further into small acid-soluble oligonucleotides. In Chromobacterium violaceum (strain ATCC 12472 / DSM 30191 / JCM 1249 / CCUG 213 / NBRC 12614 / NCIMB 9131 / NCTC 9757 / MK), this protein is Exodeoxyribonuclease 7 small subunit.